The chain runs to 202 residues: Protein TIFY 11g (202 aa).

Residues 1–11 (MDAVGAAGGGA) show a composition bias toward gly residues. The disordered stretch occupies residues 1 to 31 (MDAVGAAGGGAMLPAAARRGQPPQPPCMTTA). Over residues 12–21 (MLPAAARRGQ) the composition is skewed to low complexity. One can recognise a Tify domain in the interval 101 to 136 (ATAPTAPLTIVYGGQVLVFEHYTAEAAEKLVQRTQH). The short motif at 185-200 (PIARKASLQRFLQKRK) is the Jas element. Residues 187–194 (ARKASLQR) carry the Nuclear localization signal motif.

Belongs to the TIFY/JAZ family. Ubiquitinated. Targeted for degradation by the SCF(COI1) E3 ubiquitin ligase-proteasome pathway during jasmonate signaling.

The protein resides in the nucleus. Functionally, repressor of jasmonate responses. The polypeptide is Protein TIFY 11g (Oryza sativa subsp. japonica (Rice)).